Here is a 62-residue protein sequence, read N- to C-terminus: Large ribosomal subunit protein bL28 (62 aa).

Belongs to the bacterial ribosomal protein bL28 family.

In Thermoanaerobacter sp. (strain X514), this protein is Large ribosomal subunit protein bL28.